A 254-amino-acid polypeptide reads, in one-letter code: Cytochrome c oxidase subunit 2 (254 aa).

At 1 to 37 (MNNILNFYPAVITTDVAENWQIGFQDPATPIMEGIIN) the chain is on the mitochondrial intermembrane side. A helical membrane pass occupies residues 38–58 (LHYDLMFFICVISVFVSWMLG). The Mitochondrial matrix segment spans residues 59–83 (RTLWHFEQNQNKIPSSLTHGTLIEM). Residues 84–104 (IWTVTPAFILLIIAVPSFSLL) traverse the membrane as a helical segment. The Mitochondrial intermembrane segment spans residues 105-254 (YAMDEIISPA…VSWISNKLNE (150 aa)). The Cu cation site is built by His-186, Cys-221, Glu-223, Cys-225, His-229, and Met-232. Glu-223 serves as a coordination point for Mg(2+).

Belongs to the cytochrome c oxidase subunit 2 family. In terms of assembly, component of the cytochrome c oxidase (complex IV, CIV), a multisubunit enzyme composed of a catalytic core of 3 subunits and several supernumerary subunits. The complex exists as a monomer or a dimer and forms supercomplexes (SCs) in the inner mitochondrial membrane with ubiquinol-cytochrome c oxidoreductase (cytochrome b-c1 complex, complex III, CIII). Cu cation is required as a cofactor.

The protein localises to the mitochondrion inner membrane. The enzyme catalyses 4 Fe(II)-[cytochrome c] + O2 + 8 H(+)(in) = 4 Fe(III)-[cytochrome c] + 2 H2O + 4 H(+)(out). Functionally, component of the cytochrome c oxidase, the last enzyme in the mitochondrial electron transport chain which drives oxidative phosphorylation. The respiratory chain contains 3 multisubunit complexes succinate dehydrogenase (complex II, CII), ubiquinol-cytochrome c oxidoreductase (cytochrome b-c1 complex, complex III, CIII) and cytochrome c oxidase (complex IV, CIV), that cooperate to transfer electrons derived from NADH and succinate to molecular oxygen, creating an electrochemical gradient over the inner membrane that drives transmembrane transport and the ATP synthase. Cytochrome c oxidase is the component of the respiratory chain that catalyzes the reduction of oxygen to water. Electrons originating from reduced cytochrome c in the intermembrane space (IMS) are transferred via the dinuclear copper A center (CU(A)) of subunit 2 and heme A of subunit 1 to the active site in subunit 1, a binuclear center (BNC) formed by heme A3 and copper B (CU(B)). The BNC reduces molecular oxygen to 2 water molecules using 4 electrons from cytochrome c in the IMS and 4 protons from the mitochondrial matrix. The polypeptide is Cytochrome c oxidase subunit 2 (COX2) (Chondrus crispus (Carrageen Irish moss)).